We begin with the raw amino-acid sequence, 71 residues long: Beta-defensin 7 (71 aa).

The N-terminal stretch at 1-22 (MRIHYVLFAFLLVLLSPFAAFS) is a signal peptide. Position 23 is a pyrrolidone carboxylic acid (Q23). Positions 23 to 25 (QDI) are excised as a propeptide. 3 disulfide bridges follow: C31/C58, C38/C52, and C42/C59.

The protein belongs to the beta-defensin family. LAP/TAP subfamily.

Its subcellular location is the secreted. Functionally, has bactericidal activity. The protein is Beta-defensin 7 (Defb7) of Mus musculus (Mouse).